Reading from the N-terminus, the 160-residue chain is ATP synthase subunit b (160 aa).

A helical membrane pass occupies residues 5-27 (IEQILTQIIAFLIMLGVLKKFVW).

The protein belongs to the ATPase B chain family. In terms of assembly, F-type ATPases have 2 components, F(1) - the catalytic core - and F(0) - the membrane proton channel. F(1) has five subunits: alpha(3), beta(3), gamma(1), delta(1), epsilon(1). F(0) has three main subunits: a(1), b(2) and c(10-14). The alpha and beta chains form an alternating ring which encloses part of the gamma chain. F(1) is attached to F(0) by a central stalk formed by the gamma and epsilon chains, while a peripheral stalk is formed by the delta and b chains.

It localises to the cell inner membrane. F(1)F(0) ATP synthase produces ATP from ADP in the presence of a proton or sodium gradient. F-type ATPases consist of two structural domains, F(1) containing the extramembraneous catalytic core and F(0) containing the membrane proton channel, linked together by a central stalk and a peripheral stalk. During catalysis, ATP synthesis in the catalytic domain of F(1) is coupled via a rotary mechanism of the central stalk subunits to proton translocation. Its function is as follows. Component of the F(0) channel, it forms part of the peripheral stalk, linking F(1) to F(0). The protein is ATP synthase subunit b of Protochlamydia amoebophila (strain UWE25).